Here is a 216-residue protein sequence, read N- to C-terminus: Probable transaldolase (216 aa).

The active-site Schiff-base intermediate with substrate is the Lys83.

It belongs to the transaldolase family. Type 3B subfamily.

The protein localises to the cytoplasm. It carries out the reaction D-sedoheptulose 7-phosphate + D-glyceraldehyde 3-phosphate = D-erythrose 4-phosphate + beta-D-fructose 6-phosphate. The protein operates within carbohydrate degradation; pentose phosphate pathway; D-glyceraldehyde 3-phosphate and beta-D-fructose 6-phosphate from D-ribose 5-phosphate and D-xylulose 5-phosphate (non-oxidative stage): step 2/3. Functionally, transaldolase is important for the balance of metabolites in the pentose-phosphate pathway. The polypeptide is Probable transaldolase (Caldanaerobacter subterraneus subsp. tengcongensis (strain DSM 15242 / JCM 11007 / NBRC 100824 / MB4) (Thermoanaerobacter tengcongensis)).